We begin with the raw amino-acid sequence, 431 residues long: F-box protein pof14 (431 aa).

The F-box; atypical domain maps to 172-186 (CPDEILQLIFSYCYD).

In terms of assembly, component of the E3 ubiquitin ligase Skp1-Cullin-1-F-box (SCF) complex. Interacts with skp1, cul1 and erg9.

The protein localises to the cytoplasm. It localises to the nucleus. The protein resides in the endoplasmic reticulum. Its function is as follows. Expression is induced during oxidative stress. Plays an essential, SCF-independent, role in the stress response to hydrogen peroxide for survival, by negatively regulating ergosterol synthesis via direct binding to the squalene synthase erg9. The sequence is that of F-box protein pof14 (pof14) from Schizosaccharomyces pombe (strain 972 / ATCC 24843) (Fission yeast).